A 377-amino-acid chain; its full sequence is Succinyl-diaminopimelate desuccinylase (377 aa).

H68 serves as a coordination point for Zn(2+). The active site involves D70. D101 contributes to the Zn(2+) binding site. The active-site Proton acceptor is E135. Residues E136, E164, and H350 each contribute to the Zn(2+) site.

Belongs to the peptidase M20A family. DapE subfamily. As to quaternary structure, homodimer. It depends on Zn(2+) as a cofactor. The cofactor is Co(2+).

The enzyme catalyses N-succinyl-(2S,6S)-2,6-diaminopimelate + H2O = (2S,6S)-2,6-diaminopimelate + succinate. It participates in amino-acid biosynthesis; L-lysine biosynthesis via DAP pathway; LL-2,6-diaminopimelate from (S)-tetrahydrodipicolinate (succinylase route): step 3/3. Functionally, catalyzes the hydrolysis of N-succinyl-L,L-diaminopimelic acid (SDAP), forming succinate and LL-2,6-diaminopimelate (DAP), an intermediate involved in the bacterial biosynthesis of lysine and meso-diaminopimelic acid, an essential component of bacterial cell walls. The protein is Succinyl-diaminopimelate desuccinylase of Acinetobacter baumannii (strain SDF).